Here is a 590-residue protein sequence, read N- to C-terminus: Arginine--tRNA ligase (590 aa).

The 'HIGH' region motif lies at 130-140; it reads PNIAKEMHVGH.

The protein belongs to the class-I aminoacyl-tRNA synthetase family. Monomer.

The protein localises to the cytoplasm. It carries out the reaction tRNA(Arg) + L-arginine + ATP = L-arginyl-tRNA(Arg) + AMP + diphosphate. The chain is Arginine--tRNA ligase from Synechococcus sp. (strain CC9311).